Here is a 551-residue protein sequence, read N- to C-terminus: Arginine--tRNA ligase (551 aa).

The short motif at 124-134 is the 'HIGH' region element; the sequence is ANPTGPLHIGH.

This sequence belongs to the class-I aminoacyl-tRNA synthetase family. As to quaternary structure, monomer.

The protein localises to the cytoplasm. It catalyses the reaction tRNA(Arg) + L-arginine + ATP = L-arginyl-tRNA(Arg) + AMP + diphosphate. This is Arginine--tRNA ligase from Solidesulfovibrio magneticus (strain ATCC 700980 / DSM 13731 / RS-1) (Desulfovibrio magneticus).